A 123-amino-acid chain; its full sequence is Large ribosomal subunit protein bL12 (123 aa).

Belongs to the bacterial ribosomal protein bL12 family. As to quaternary structure, homodimer. Part of the ribosomal stalk of the 50S ribosomal subunit. Forms a multimeric L10(L12)X complex, where L10 forms an elongated spine to which 2 to 4 L12 dimers bind in a sequential fashion. Binds GTP-bound translation factors.

Functionally, forms part of the ribosomal stalk which helps the ribosome interact with GTP-bound translation factors. Is thus essential for accurate translation. This chain is Large ribosomal subunit protein bL12, found in Dechloromonas aromatica (strain RCB).